The chain runs to 357 residues: Protein RecA (357 aa).

Residue 71–78 coordinates ATP; the sequence is GPESSGKT.

The protein belongs to the RecA family.

Its subcellular location is the cytoplasm. Functionally, can catalyze the hydrolysis of ATP in the presence of single-stranded DNA, the ATP-dependent uptake of single-stranded DNA by duplex DNA, and the ATP-dependent hybridization of homologous single-stranded DNAs. It interacts with LexA causing its activation and leading to its autocatalytic cleavage. The polypeptide is Protein RecA (Ehrlichia ruminantium (strain Gardel)).